We begin with the raw amino-acid sequence, 359 residues long: MTLRSLYLQHFRNYEEAYLEFSPQFNLICGPNAKGKTTLLEAIHCLMIGRSFRTSHYPDLIQQQFESFFLEAQFYKHGIEQTLKFGFHTTDRKIIYNSTPLATLSNLLGLIPGVIITPDDVQLVKGSPQLRRQFLDIQIAQVDPLYVHHLNRYGRALKQRNHLLKMKQQISIDSWEQEMTHSAAYLIQQRYQTITHLQNLAQKYYHLLSGENDLLTLEYRSIANSNLSIDEIKKLLVKQLCKNRQREMQIGYTLSGPHKDDLFVAIGGRDIRYFASEGQQRSCVNALHFAEWNRLHQRGDGDFPLFMIDDIGMSLDSNRKDRLVEQLQSVGQVFLTTTDPKFLDHIDADKKIFTLPFYN.

An ATP-binding site is contributed by 30 to 37 (GPNAKGKT).

This sequence belongs to the RecF family.

The protein localises to the cytoplasm. Its function is as follows. The RecF protein is involved in DNA metabolism; it is required for DNA replication and normal SOS inducibility. RecF binds preferentially to single-stranded, linear DNA. It also seems to bind ATP. The sequence is that of DNA replication and repair protein RecF from Protochlamydia amoebophila (strain UWE25).